The primary structure comprises 509 residues: Phytase A (509 aa).

The first 15 residues, 1–15 (MFLLMVPLFSYLAAA), serve as a signal peptide directing secretion. A disulfide bridge connects residues Cys-27 and Cys-36. Gln-46, Tyr-47, Arg-75, His-76, Arg-79, Thr-82, and Arg-164 together coordinate 1D-myo-inositol hexakisphosphate. Disulfide bonds link Cys-65–Cys-444, Cys-216–Cys-507, Cys-266–Cys-295, and Cys-478–Cys-486. Residue His-76 is the Nucleophile of the active site. N-linked (GlcNAc...) asparagine glycosylation is found at Asn-171 and Asn-208. Lys-314 is a 1D-myo-inositol hexakisphosphate binding site. Asn-348, Asn-352, and Asn-367 each carry an N-linked (GlcNAc...) asparagine glycan. Positions 376 and 377 each coordinate 1D-myo-inositol hexakisphosphate. N-linked (GlcNAc...) asparagine glycosylation occurs at Asn-401.

This sequence belongs to the histidine acid phosphatase family. As to quaternary structure, monomer.

The protein localises to the secreted. The enzyme catalyses 1D-myo-inositol hexakisphosphate + H2O = 1D-myo-inositol 1,2,4,5,6-pentakisphosphate + phosphate. The catalysed reaction is 1D-myo-inositol 1,2,4,5,6-pentakisphosphate + H2O = 1D-myo-inositol 1,2,5,6-tetrakisphosphate + phosphate. It catalyses the reaction 1D-myo-inositol 1,2,5,6-tetrakisphosphate + H2O = 1D-myo-inositol 1,2,6-trisphosphate + phosphate. It carries out the reaction 1D-myo-inositol 1,2,6-trisphosphate + H2O = 1D-myo-inositol 1,2-bisphosphate + phosphate. The enzyme catalyses 1D-myo-inositol 1,2-bisphosphate + H2O = 1D-myo-inositol 2-phosphate + phosphate. Functionally, catalyzes the phosphate monoester hydrolysis of phytic acid (myo-inositol hexakisphosphate), which results in the stepwise formation of myo-inositol pentakis-, tetrakis-, tris-, bis-, and monophosphates, as well as the liberation of inorganic phosphate. Myo-inositol 2-monophosphate is the end product. Is also able to dephosphorylate the classic acid phosphatase substrate p-nitrophenyl phosphate. The polypeptide is Phytase A (pht-1) (Neurospora crassa (strain ATCC 24698 / 74-OR23-1A / CBS 708.71 / DSM 1257 / FGSC 987)).